The sequence spans 219 residues: Octanoyltransferase (219 aa).

Residues 31–206 enclose the BPL/LPL catalytic domain; sequence DEDVDQIWLV…ELVELLGYDQ (176 aa). Residues 70–77, 137–139, and 150–152 contribute to the substrate site; these read RGGQVTYH, SLG, and GLA. Cys-168 acts as the Acyl-thioester intermediate in catalysis.

This sequence belongs to the LipB family.

It is found in the cytoplasm. The catalysed reaction is octanoyl-[ACP] + L-lysyl-[protein] = N(6)-octanoyl-L-lysyl-[protein] + holo-[ACP] + H(+). The protein operates within protein modification; protein lipoylation via endogenous pathway; protein N(6)-(lipoyl)lysine from octanoyl-[acyl-carrier-protein]: step 1/2. Functionally, catalyzes the transfer of endogenously produced octanoic acid from octanoyl-acyl-carrier-protein onto the lipoyl domains of lipoate-dependent enzymes. Lipoyl-ACP can also act as a substrate although octanoyl-ACP is likely to be the physiological substrate. The polypeptide is Octanoyltransferase (Vibrio atlanticus (strain LGP32) (Vibrio splendidus (strain Mel32))).